We begin with the raw amino-acid sequence, 428 residues long: AP-1 complex subunit mu-2 (428 aa).

In terms of domain architecture, MHD spans 170 to 426; it reads KNEVFLDVIE…ITMAGEYELR (257 aa).

This sequence belongs to the adaptor complexes medium subunit family. Adaptor protein complex 1 (AP-1) is a heterotetramer composed of two large adaptins (gamma-type subunit and beta-type subunit), a medium adaptin (mu-type subunit) and a small adaptin (sigma-type subunit). As to expression, ubiquitous.

The protein localises to the golgi apparatus. It is found in the trans-Golgi network membrane. The protein resides in the early endosome membrane. It localises to the cytoplasmic vesicle. Its subcellular location is the clathrin-coated vesicle membrane. Functionally, subunit of clathrin-associated adaptor protein complex 1 that plays a role in protein sorting at the trans-Golgi network and early endosomes (TGN/EE). The AP complexes mediate the recruitment of clathrin to membranes and the recognition of sorting signals within the cytosolic tails of transmembrane cargo molecules. Required for KNOLLE localization at the cell plate to mediate cytokinesis. Functions redundantly with AP1M1 in multiple post-Golgi trafficking pathways leading from the TGN to the vacuole, the plasma membrane, and the cell-division plane. This chain is AP-1 complex subunit mu-2 (AP1M2), found in Arabidopsis thaliana (Mouse-ear cress).